We begin with the raw amino-acid sequence, 319 residues long: NH(3)-dependent NAD(+) synthetase (319 aa).

33-40 contributes to the ATP binding site; that stretch reads GLSGGIDS. Residue Asp39 participates in Mg(2+) binding. Arg169 lines the deamido-NAD(+) pocket. Thr189 provides a ligand contact to ATP. Glu194 contributes to the Mg(2+) binding site. Residues Lys202 and Asp209 each contribute to the deamido-NAD(+) site. 2 residues coordinate ATP: Lys218 and Thr240.

Belongs to the NAD synthetase family. As to quaternary structure, homodimer.

It carries out the reaction deamido-NAD(+) + NH4(+) + ATP = AMP + diphosphate + NAD(+) + H(+). Its pathway is cofactor biosynthesis; NAD(+) biosynthesis; NAD(+) from deamido-NAD(+) (ammonia route): step 1/1. Its function is as follows. Catalyzes the ATP-dependent amidation of deamido-NAD to form NAD. Uses ammonia as a nitrogen source. The protein is NH(3)-dependent NAD(+) synthetase of Mesorhizobium japonicum (strain LMG 29417 / CECT 9101 / MAFF 303099) (Mesorhizobium loti (strain MAFF 303099)).